The chain runs to 98 residues: NADH-ubiquinone oxidoreductase chain 4L (98 aa).

3 consecutive transmembrane segments (helical) span residues 1 to 21 (MSLTYMNMFMAFTISLLGLLL), 29 to 49 (SLLCLEGMMLSLFVMMTMIIL), and 61 to 81 (IILLVFAACEAALGLSLLVMV).

It belongs to the complex I subunit 4L family. Core subunit of respiratory chain NADH dehydrogenase (Complex I) which is composed of 45 different subunits.

The protein localises to the mitochondrion inner membrane. It carries out the reaction a ubiquinone + NADH + 5 H(+)(in) = a ubiquinol + NAD(+) + 4 H(+)(out). Functionally, core subunit of the mitochondrial membrane respiratory chain NADH dehydrogenase (Complex I) which catalyzes electron transfer from NADH through the respiratory chain, using ubiquinone as an electron acceptor. Part of the enzyme membrane arm which is embedded in the lipid bilayer and involved in proton translocation. In Platyrrhinus brachycephalus (Short-headed broad-nosed bat), this protein is NADH-ubiquinone oxidoreductase chain 4L (MT-ND4L).